Reading from the N-terminus, the 334-residue chain is MIREKLKVSTQTLQWKCVESRVDSKRLYYGRFILSPLMKGQADTIGITMRRILLGEIEGTCITRAKSEKIPHEYSTIVGIQESIHEILMNLKEIVLRSNLYGTREASICFKGPGYVTAQDIILPSVEVIDNTQHIANLTEPINLCIELQIERKRGYRIKTLNNIQDGSYTIDAVFMPVRNANHSIHSYVNGNQKQEILFLEIWTNGSLTPKEALYEASRNLIDLFIPFLHAEEENLNFENNQHKMTLPLFTFHDHDRFVKDKLRKNQKEITLKSIFIDQLELPPRIYNCLKKSNIHTVLELLNKSQEDLMKIEHFRVEDLKFILNILQIENHFV.

The tract at residues 1-232 (MIREKLKVST…DLFIPFLHAE (232 aa)) is alpha N-terminal domain (alpha-NTD). The tract at residues 267–334 (QKEITLKSIF…NILQIENHFV (68 aa)) is alpha C-terminal domain (alpha-CTD).

It belongs to the RNA polymerase alpha chain family. In plastids the minimal PEP RNA polymerase catalytic core is composed of four subunits: alpha, beta, beta', and beta''. When a (nuclear-encoded) sigma factor is associated with the core the holoenzyme is formed, which can initiate transcription.

It is found in the plastid. Its subcellular location is the chloroplast. The catalysed reaction is RNA(n) + a ribonucleoside 5'-triphosphate = RNA(n+1) + diphosphate. In terms of biological role, DNA-dependent RNA polymerase catalyzes the transcription of DNA into RNA using the four ribonucleoside triphosphates as substrates. This is DNA-directed RNA polymerase subunit alpha from Pisum sativum (Garden pea).